We begin with the raw amino-acid sequence, 272 residues long: uncharacterized protein (272 aa).

A run of 4 helical transmembrane segments spans residues proline 9–valine 29, leucine 38–proline 58, alanine 154–leucine 174, and alanine 188–isoleucine 208. At alanine 209–alanine 272 the chain is on the cytoplasmic side.

This sequence belongs to the MotA family.

The protein localises to the cell membrane. May be involved in some transport function. This is an uncharacterized protein from Bacillus subtilis (strain 168).